Reading from the N-terminus, the 134-residue chain is Rubredoxin-2 (134 aa).

Positions 1-53 (MAKYQCPDCQYIYDECKGEPHEGFQPNTNWGEIPEEWACPDCAVRDKIDFKML) constitute a Rubredoxin-like domain. Residues cysteine 6, cysteine 9, cysteine 39, and cysteine 42 each coordinate Fe cation. Residues 99–116 (SITDERENTPDNKVERRS) show a composition bias toward basic and acidic residues. A disordered region spans residues 99-134 (SITDERENTPDNKVERRSQSQAVRRSSVKKIKNNKR). Basic residues predominate over residues 124 to 134 (SSVKKIKNNKR).

It belongs to the rubredoxin family. Requires Fe(3+) as cofactor.

The protein resides in the cytoplasm. It functions in the pathway hydrocarbon metabolism; alkane degradation. In terms of biological role, involved in the hydrocarbon hydroxylating system, which transfers electrons from NADH to rubredoxin reductase and then through rubredoxin to alkane 1 monooxygenase. The protein is Rubredoxin-2 (alkF) of Pseudomonas putida (Arthrobacter siderocapsulatus).